The following is a 297-amino-acid chain: Protoheme IX farnesyltransferase (297 aa).

9 consecutive transmembrane segments (helical) span residues 26 to 46, 48 to 68, 96 to 116, 120 to 140, 147 to 167, 174 to 194, 218 to 238, 243 to 263, and 276 to 296; these read VTQLAVFCAVIGMFLATPGMV, YPVLFGGIAGIWLLAGAAFAV, FHIIIFSIILGSLGMIILWNF, LTMWLTLATFVGYAVIYTWLL, NIVIGGLSGAMPPALGWAAVT, AWLLVLIIFVWTPPHFWALAL, LLNILLYTLILIAATLLPYIY, IIYLISAIVLGLMFLAYVIAL, and FRFSITYLSLLFAALLIDHYF.

Belongs to the UbiA prenyltransferase family. Protoheme IX farnesyltransferase subfamily.

The protein resides in the cell membrane. It carries out the reaction heme b + (2E,6E)-farnesyl diphosphate + H2O = Fe(II)-heme o + diphosphate. The protein operates within porphyrin-containing compound metabolism; heme O biosynthesis; heme O from protoheme: step 1/1. Functionally, converts heme B (protoheme IX) to heme O by substitution of the vinyl group on carbon 2 of heme B porphyrin ring with a hydroxyethyl farnesyl side group. This is Protoheme IX farnesyltransferase from Polynucleobacter asymbioticus (strain DSM 18221 / CIP 109841 / QLW-P1DMWA-1) (Polynucleobacter necessarius subsp. asymbioticus).